The sequence spans 101 residues: Small ribosomal subunit protein bS6 (101 aa).

It belongs to the bacterial ribosomal protein bS6 family.

Binds together with bS18 to 16S ribosomal RNA. The chain is Small ribosomal subunit protein bS6 from Nitratidesulfovibrio vulgaris (strain DSM 19637 / Miyazaki F) (Desulfovibrio vulgaris).